The following is a 284-amino-acid chain: RNase adapter protein RapZ (284 aa).

G8–S15 serves as a coordination point for ATP. A GTP-binding site is contributed by D56 to N59. Residues R266–P284 form an RNA-binding region.

The protein belongs to the RapZ-like family. RapZ subfamily. In terms of assembly, homotrimer.

Functionally, modulates the synthesis of GlmS, by affecting the processing and stability of the regulatory small RNA GlmZ. When glucosamine-6-phosphate (GlcN6P) concentrations are high in the cell, RapZ binds GlmZ and targets it to cleavage by RNase E. Consequently, GlmZ is inactivated and unable to activate GlmS synthesis. Under low GlcN6P concentrations, RapZ is sequestered and inactivated by an other regulatory small RNA, GlmY, preventing GlmZ degradation and leading to synthesis of GlmS. This chain is RNase adapter protein RapZ, found in Escherichia coli O1:K1 / APEC.